The sequence spans 607 residues: Replication factor C large subunit (607 aa).

Position 55-62 (55-62) interacts with ATP; that stretch reads GPAGIGKT. Residues 468–607 form a disordered region; that stretch reads EEEKPQKEGS…PKNQKTLFDF (140 aa). Positions 506–518 are enriched in basic and acidic residues; it reads TSEKKENSEKKEN. Residues 548-558 are compositionally biased toward polar residues; the sequence is SESVEQKTSSK.

This sequence belongs to the activator 1 small subunits family. RfcL subfamily. As to quaternary structure, heteromultimer composed of small subunits (RfcS) and large subunits (RfcL).

Functionally, part of the RFC clamp loader complex which loads the PCNA sliding clamp onto DNA. The protein is Replication factor C large subunit of Methanosarcina acetivorans (strain ATCC 35395 / DSM 2834 / JCM 12185 / C2A).